Reading from the N-terminus, the 350-residue chain is Biotin synthase (350 aa).

The Radical SAM core domain occupies 42-269 (NEVQVSTLCS…QSHVRLSAGR (228 aa)). [4Fe-4S] cluster-binding residues include C57, C61, and C64. [2Fe-2S] cluster contacts are provided by C101, C132, C192, and R264.

The protein belongs to the radical SAM superfamily. Biotin synthase family. Homodimer. [4Fe-4S] cluster serves as cofactor. [2Fe-2S] cluster is required as a cofactor.

The enzyme catalyses (4R,5S)-dethiobiotin + (sulfur carrier)-SH + 2 reduced [2Fe-2S]-[ferredoxin] + 2 S-adenosyl-L-methionine = (sulfur carrier)-H + biotin + 2 5'-deoxyadenosine + 2 L-methionine + 2 oxidized [2Fe-2S]-[ferredoxin]. The protein operates within cofactor biosynthesis; biotin biosynthesis; biotin from 7,8-diaminononanoate: step 2/2. Catalyzes the conversion of dethiobiotin (DTB) to biotin by the insertion of a sulfur atom into dethiobiotin via a radical-based mechanism. This Saccharophagus degradans (strain 2-40 / ATCC 43961 / DSM 17024) protein is Biotin synthase.